A 210-amino-acid chain; its full sequence is MQKSLHSKLFKIIGFFGGSFDPIHYGHLKNAAQLKDKLRLSKLFLMPCDKPVHKKQLNFSINQRIDMLHLAIKEFNTLSIDTREIKQNKNSYTINSLKYIQSKYQNNSICLIMGMDSFNTLSSWEECQNFYQYCHLVIMSRPGILTYQKKYGFRLTNIINDLTKQKTGFIFFANNQMLNISSSTIQGKIKSQKNLSGLLPDSIINYINAL.

It belongs to the NadD family.

It catalyses the reaction nicotinate beta-D-ribonucleotide + ATP + H(+) = deamido-NAD(+) + diphosphate. It participates in cofactor biosynthesis; NAD(+) biosynthesis; deamido-NAD(+) from nicotinate D-ribonucleotide: step 1/1. Functionally, catalyzes the reversible adenylation of nicotinate mononucleotide (NaMN) to nicotinic acid adenine dinucleotide (NaAD). The polypeptide is Probable nicotinate-nucleotide adenylyltransferase (Vesicomyosocius okutanii subsp. Calyptogena okutanii (strain HA)).